A 372-amino-acid polypeptide reads, in one-letter code: NAD(P)H-quinone oxidoreductase subunit 1 (372 aa).

9 helical membrane passes run 27–47 (AIWMPLPMILMLIGATVGVLV), 65–85 (PEYIGPLGLLAPVADGLKLVF), 97–117 (WLFTLGPILVVLPVFLSYLIV), 128–148 (VGTGIFLWIALSSIQPIGLLM), 166–186 (AAQSISYEIPLALSVLAIVMM), 204–224 (ILGWNIWRQPLGFMIFWIAAL), 266–286 (ILSALLVAVLYLGGWDFPIPI), 308–328 (ALGITMTLVKAYFLVFIAILL), and 347–367 (FLLPVGLVNLLLTAALKLAFP).

This sequence belongs to the complex I subunit 1 family. NDH-1 is composed of at least 11 different subunits.

It localises to the cellular thylakoid membrane. The catalysed reaction is a plastoquinone + NADH + (n+1) H(+)(in) = a plastoquinol + NAD(+) + n H(+)(out). The enzyme catalyses a plastoquinone + NADPH + (n+1) H(+)(in) = a plastoquinol + NADP(+) + n H(+)(out). In terms of biological role, NDH-1 shuttles electrons from an unknown electron donor, via FMN and iron-sulfur (Fe-S) centers, to quinones in the respiratory and/or the photosynthetic chain. The immediate electron acceptor for the enzyme in this species is believed to be plastoquinone. Couples the redox reaction to proton translocation, and thus conserves the redox energy in a proton gradient. This is NAD(P)H-quinone oxidoreductase subunit 1 from Nostoc sp. (strain PCC 7120 / SAG 25.82 / UTEX 2576).